A 369-amino-acid polypeptide reads, in one-letter code: 4-hydroxy-3-methylbut-2-en-1-yl diphosphate synthase (flavodoxin) (369 aa).

Residues cysteine 268, cysteine 271, cysteine 303, and glutamate 310 each contribute to the [4Fe-4S] cluster site.

It belongs to the IspG family. [4Fe-4S] cluster serves as cofactor.

It carries out the reaction (2E)-4-hydroxy-3-methylbut-2-enyl diphosphate + oxidized [flavodoxin] + H2O + 2 H(+) = 2-C-methyl-D-erythritol 2,4-cyclic diphosphate + reduced [flavodoxin]. Its pathway is isoprenoid biosynthesis; isopentenyl diphosphate biosynthesis via DXP pathway; isopentenyl diphosphate from 1-deoxy-D-xylulose 5-phosphate: step 5/6. In terms of biological role, converts 2C-methyl-D-erythritol 2,4-cyclodiphosphate (ME-2,4cPP) into 1-hydroxy-2-methyl-2-(E)-butenyl 4-diphosphate. This Exiguobacterium sibiricum (strain DSM 17290 / CCUG 55495 / CIP 109462 / JCM 13490 / 255-15) protein is 4-hydroxy-3-methylbut-2-en-1-yl diphosphate synthase (flavodoxin).